A 246-amino-acid polypeptide reads, in one-letter code: Isoprenyl transferase (246 aa).

Asp-18 is an active-site residue. Asp-18 contacts Mg(2+). Substrate-binding positions include 19–22 (GNGR), Trp-23, Arg-31, His-35, and 63–65 (SAE). Residue Asn-66 is the Proton acceptor of the active site. Substrate is bound by residues Trp-67, Arg-69, Arg-186, and 192 to 194 (RIS). Position 205 (Glu-205) interacts with Mg(2+).

This sequence belongs to the UPP synthase family. As to quaternary structure, homodimer. Mg(2+) is required as a cofactor.

Catalyzes the condensation of isopentenyl diphosphate (IPP) with allylic pyrophosphates generating different type of terpenoids. This Geobacter sulfurreducens (strain ATCC 51573 / DSM 12127 / PCA) protein is Isoprenyl transferase.